A 399-amino-acid chain; its full sequence is Glucose-1-phosphate adenylyltransferase (399 aa).

Alpha-D-glucose 1-phosphate-binding positions include Gly-158, 174–175 (EK), and Ser-192.

The protein belongs to the bacterial/plant glucose-1-phosphate adenylyltransferase family. In terms of assembly, homotetramer.

It catalyses the reaction alpha-D-glucose 1-phosphate + ATP + H(+) = ADP-alpha-D-glucose + diphosphate. Its pathway is glycan biosynthesis; glycogen biosynthesis. Functionally, involved in the biosynthesis of ADP-glucose, a building block required for the elongation reactions to produce glycogen. Catalyzes the reaction between ATP and alpha-D-glucose 1-phosphate (G1P) to produce pyrophosphate and ADP-Glc. This is Glucose-1-phosphate adenylyltransferase from Streptomyces coelicolor (strain ATCC BAA-471 / A3(2) / M145).